A 228-amino-acid chain; its full sequence is Protein CWC15 homolog A (228 aa).

The segment at 1 to 126 is disordered; the sequence is MTTAARPTFE…DEDSDDDTAA (126 aa). A compositionally biased stretch (polar residues) spans 24 to 34; that stretch reads SQLSKQYSSRD. Residues 52-84 are compositionally biased toward basic and acidic residues; sequence EEVRSRDFRRELEERERVVARDKNRDRPTREHT. Positions 102–124 are enriched in acidic residues; that stretch reads DADDPLTDEDGDEDSDEDSDDDT. Residues 121–165 are a coiled coil; sequence DDDTAALLAELEKIKKERAEEKDRKELEQKAEEERIRMENILSGN.

Belongs to the CWC15 family. Identified in the spliceosome C complex. Component of the minor spliceosome, which splices U12-type introns.

The protein resides in the nucleus. Functionally, involved in pre-mRNA splicing as component of the spliceosome. The sequence is that of Protein CWC15 homolog A (cwc15-a) from Xenopus laevis (African clawed frog).